The primary structure comprises 227 residues: PKHD-type hydroxylase Bpro_3048 (227 aa).

Residues 78–179 enclose the Fe2OG dioxygenase domain; sequence KIFTPRINRY…RLACFFWVES (102 aa). Residues His97, Asp99, and His160 each contribute to the Fe cation site. Arg170 is a 2-oxoglutarate binding site.

Requires Fe(2+) as cofactor. L-ascorbate is required as a cofactor.

This Polaromonas sp. (strain JS666 / ATCC BAA-500) protein is PKHD-type hydroxylase Bpro_3048.